The primary structure comprises 809 residues: Quinate/shikimate dehydrogenase (quinone) (809 aa).

5 consecutive transmembrane segments (helical) span residues 14 to 34 (VWCF…VIGG), 41 to 61 (GGSW…FFMF), 68 to 88 (VWLY…DAGF), 90 to 110 (FWPL…VMLT), and 127 to 147 (AYVI…GMFI).

Belongs to the bacterial PQQ dehydrogenase family. The cofactor is pyrroloquinoline quinone.

It is found in the cell membrane. The catalysed reaction is L-quinate + a quinone = 3-dehydroquinate + a quinol. It carries out the reaction shikimate + a quinone = 3-dehydroshikimate + a quinol. It participates in aromatic compound metabolism; 3,4-dihydroxybenzoate biosynthesis; 3-dehydroquinate from D-quinate (PQQ route): step 1/1. Can act either on quinate or on shikimate. The polypeptide is Quinate/shikimate dehydrogenase (quinone) (quiA) (Acinetobacter baylyi (strain ATCC 33305 / BD413 / ADP1)).